The following is a 63-amino-acid chain: Conotoxin Tx-D0111 (63 aa).

The first 19 residues, 1–19 (MRCLPVFVILLLLIASTPS), serve as a signal peptide directing secretion. Residues 20–47 (DTVPLKTKDDMPQASFHGNARRTLQMLS) constitute a propeptide that is removed on maturation.

This sequence belongs to the conotoxin T superfamily. Contains 2 disulfide bonds that can be either 'C1-C3, C2-C4' or 'C1-C4, C2-C3', since these disulfide connectivities have been observed for conotoxins with cysteine framework V (for examples, see AC P0DQQ7 and AC P81755). In terms of tissue distribution, expressed by the venom duct.

The protein resides in the secreted. This Conus textile (Cloth-of-gold cone) protein is Conotoxin Tx-D0111.